The following is a 547-amino-acid chain: MFS-type transporter ungB (547 aa).

14 consecutive transmembrane segments (helical) span residues 14 to 34 (LLVT…ETVL), 50 to 70 (DVGW…MAWG), 80 to 100 (WVFL…GVSP), 111 to 131 (IAGL…SNTI), 138 to 158 (IYLG…PVIG), 169 to 189 (WCFF…VFCL), 210 to 230 (LLGS…LEWG), 238 to 258 (SWRV…FAVV), 279 to 299 (LGLI…VYYL), 316 to 336 (LAIL…GILV), 343 to 363 (TPFL…LSSL), 366 to 386 (ASGL…IGLG), 392 to 412 (VVPS…TLCF), and 475 to 495 (AVSE…LGSA). Positions 503–547 (PGHKEATEKVEGEGQGQGQQQEQDQGQGWGEVGESHALAHPTADK) are disordered. Over residues 504–514 (GHKEATEKVEG) the composition is skewed to basic and acidic residues.

The protein belongs to the major facilitator superfamily. TCR/Tet family.

It localises to the membrane. Functionally, MFS-type transporter; part of the gene cluster that mediates the biosynthesis of the unguisins, gamma-aminobutyric acid (GABA)-containing fungal cyclic heptapeptides with the amino acid sequence cyclo-(D-Ala1-D-Val2-L-Phe3-D-Val4-D-Ala5-D-Trp6-GABA7) for unguisin A and cyclo-(D-Ala1-D-Val2-L-Leu3-D-Val4-D-Ala5-D-Trp6-GABA7) for unguisin B. May be involved in the secretion of unguisins. This chain is MFS-type transporter ungB, found in Aspergillus violaceofuscus (strain CBS 115571).